The following is a 356-amino-acid chain: MATAALLRGATPGRGGPVWRWRLRAAPRCRLAHSSCSPGGDPTAGAAWACFRLDGRTLLRVRGPDAAPFLLGLLTNELPLPSPAAAGAPPAARAGYAHFLNVQGRTLYDVILYGLQEHSEVSGFLLECDSSVQGALQKHLALYRIRRKVTVEPHPELRVWAVLPSSPEACGAASLQERAGAAAILIRDPRTARMGWRLLTQDEGPALVPGGRLGDLWDYHQHRYLQGVPEGVRDLPPGVALPLESNLAFMNGVSFTKGCYIGQELTARTHHMGVIRKRLFPVRFLDPLPTSGITPGATVLTASGQTVGKFRAGQGNVGLALLWSEKIKGPLHIRASEGAQVALAASVPDWWPTVSK.

The transit peptide at 1–39 directs the protein to the mitochondrion; that stretch reads MATAALLRGATPGRGGPVWRWRLRAAPRCRLAHSSCSPG. Lys309 carries the N6-acetyllysine; alternate modification. At Lys309 the chain carries N6-succinyllysine; alternate.

It belongs to the GcvT family. CAF17/IBA57 subfamily. Monomer. Heterotetramer; forms a dimer of dimers with ISCA2. Interacts with [2Fe-2S]-ISCA2 forming the heterodimer [2Fe- 2S]-ISCA2-IBA57 complex; [2Fe-2S] cluster binding is absolutely required to promote the complex formation. As to expression, expressed in skin fibroblasts and skeletal muscle (at protein level).

The protein localises to the mitochondrion. Functionally, mitochondrial protein involved in the maturation of mitochondrial [4Fe-4S]-proteins in the late stage of the iron-sulfur cluster assembly pathway. Operates in cooperation with ISCA2 in the maturation of [4Fe-4S] proteins. In terms of biological role, involved in the maturation of mitochondrial 2Fe-2S proteins in the late stage of the iron-sulfur cluster assembly pathway. This Homo sapiens (Human) protein is Iron-sulfur cluster assembly factor IBA57, mitochondrial (IBA57).